The sequence spans 276 residues: uncharacterized protein (276 aa).

To E.coli YjfZ.

This is an uncharacterized protein from Escherichia coli (strain K12).